A 442-amino-acid chain; its full sequence is Alpha-1,6-mannosyl-glycoprotein 2-beta-N-acetylglucosaminyltransferase (442 aa).

The Cytoplasmic segment spans residues 1–9 (MRFRIYKRK). Residues 10-29 (VLILTLVVAACGFVLWSSNG) form a helical; Signal-anchor for type II membrane protein membrane-spanning segment. The Lumenal segment spans residues 30–442 (RQRKNDALAP…ELCKSYRRLQ (413 aa)). N-linked (GlcNAc...) asparagine glycosylation is found at asparagine 64 and asparagine 81. Residues 118–122 (QVHNR) and aspartate 149 contribute to the substrate site. A disulfide bond links cysteine 191 and cysteine 205. Position 224-228 (224-228 (QTKHH)) interacts with substrate. Aspartate 256 serves as a coordination point for Mn(2+). Cysteine 278 and cysteine 281 are disulfide-bonded. Arginine 293 lines the substrate pocket. Disulfide bonds link cysteine 329–cysteine 352, cysteine 334–cysteine 435, and cysteine 373–cysteine 381. Position 369 (histidine 369) interacts with Mn(2+).

Belongs to the glycosyltransferase 16 (GT16) protein family. As to quaternary structure, homodimer. It depends on Mn(2+) as a cofactor. Detected in liver (at protein level). Detected in liver, brain, thymus and spleen.

It is found in the golgi apparatus membrane. It catalyses the reaction an N(4)-{beta-D-GlcNAc-(1-&gt;2)-alpha-D-Man-(1-&gt;3)-[alpha-D-Man-(1-&gt;6)]-beta-D-Man-(1-&gt;4)-beta-D-GlcNAc-(1-&gt;4)-beta-D-GlcNAc}-L-asparaginyl-[protein] + UDP-N-acetyl-alpha-D-glucosamine = N(4)-{beta-D-GlcNAc-(1-&gt;2)-alpha-D-Man-(1-&gt;3)-[beta-D-GlcNAc-(1-&gt;2)-alpha-D-Man-(1-&gt;6)]-beta-D-Man-(1-&gt;4)-beta-D-GlcNAc-(1-&gt;4)-beta-D-GlcNAc}-L-asparaginyl-[protein] + UDP + H(+). Its pathway is protein modification; protein glycosylation. Functionally, plays an essential role in protein N-glycosylation. Catalyzes the transfer of N-acetylglucosamine (GlcNAc) onto the free terminal mannose moiety in the core structure of the nascent N-linked glycan chain, giving rise to the second branch in complex glycans. The polypeptide is Alpha-1,6-mannosyl-glycoprotein 2-beta-N-acetylglucosaminyltransferase (Mgat2) (Rattus norvegicus (Rat)).